The following is a 123-amino-acid chain: Unclassified hydrophobin 9 (123 aa).

A signal peptide spans 1 to 24 (MFFFNTKPIVFLVVLSVVATFAAA). Intrachain disulfides connect Cys37-Cys103, Cys45-Cys97, Cys46-Cys88, and Cys104-Cys117.

The protein belongs to the fungal hydrophobin family. In terms of assembly, self-assembles to form functional amyloid fibrils called rodlets. Self-assembly into fibrillar rodlets occurs spontaneously at hydrophobic:hydrophilic interfaces and the rodlets further associate laterally to form amphipathic monolayers.

It is found in the secreted. The protein localises to the cell wall. Functionally, aerial growth, conidiation, and dispersal of filamentous fungi in the environment rely upon a capability of their secreting small amphipathic proteins called hydrophobins (HPBs) with low sequence identity. Class I can self-assemble into an outermost layer of rodlet bundles on aerial cell surfaces, conferring cellular hydrophobicity that supports fungal growth, development and dispersal; whereas Class II form highly ordered films at water-air interfaces through intermolecular interactions but contribute nothing to the rodlet structure. This Pleurotus ostreatus (strain PC15) (Oyster mushroom) protein is Unclassified hydrophobin 9.